A 117-amino-acid polypeptide reads, in one-letter code: CUE domain-containing protein CUE4 (117 aa).

The interval 27–74 (QVPSRTVQDAKPAPSVATNDPSPEPVPSAPEERVARLNRHGSDRKRAV) is disordered. Residue lysine 37 forms a Glycyl lysine isopeptide (Lys-Gly) (interchain with G-Cter in ubiquitin) linkage. Serine 48 is modified (phosphoserine). Positions 56–74 (PEERVARLNRHGSDRKRAV) are enriched in basic and acidic residues. Positions 74–116 (VNSDMVEIVMTMAPHVPQEKVVQDLRNTGSIEHTMENIFAGKL) constitute a CUE domain.

In terms of processing, ubiquitinated.

Its subcellular location is the cytoplasm. The protein resides in the endoplasmic reticulum. This is CUE domain-containing protein CUE4 (CUE4) from Saccharomyces cerevisiae (strain ATCC 204508 / S288c) (Baker's yeast).